The primary structure comprises 445 residues: Protein cereblon (445 aa).

The segment at 1 to 50 is disordered; sequence MAAEEGGDGRRNMGNPPPPAPAESEEEDDNEMEVEDQDGKEAEKPNMINF. The segment covering 23-36 has biased composition (acidic residues); sequence ESEEEDDNEMEVED. In terms of domain architecture, Lon N-terminal spans 82–321; the sequence is IPVLPHVMVM…CELDIMNKCT (240 aa). Residues 320-428 enclose the CULT domain; that stretch reads CTSLCCKQCQ…LTRSALLPRI (109 aa). Residues C325 and C328 each contribute to the Zn(2+) site. The (S)-thalidomide site is built by H380, W382, and W388. 2 residues coordinate Zn(2+): C393 and C396.

Belongs to the CRBN family. Component of a DCX (DDB1-CUL4-X-box) protein ligase complex. Interacts directly with DDB1.

It is found in the cytoplasm. The protein localises to the nucleus. The protein operates within protein modification; protein ubiquitination. Substrate recognition component of a DCX (DDB1-CUL4-X-box) E3 protein ligase complex that mediates the ubiquitination and subsequent proteasomal degradation of target proteins, such as MEIS2. Normal degradation of key regulatory proteins is required for normal limb outgrowth and expression of the fibroblast growth factor FGF8. Maintains presynaptic glutamate release and consequently cognitive functions, such as memory and learning, by negatively regulating large-conductance calcium-activated potassium (BK) channels in excitatory neurons. Likely to function by regulating the assembly and neuronal surface expression of BK channels via its interaction with KCNT1. May also be involved in regulating anxiety-like behaviors via a BK channel-independent mechanism. The sequence is that of Protein cereblon (CRBN) from Gallus gallus (Chicken).